The chain runs to 95 residues: MSYLLTSALLFALGVYGVLTRRTAILVFLSIELMLNAANLSLVGFARAYGLDGQVAALMVIAVAAAEVAVGLGLIVAIFRHRESTAVDDLSELRG.

3 consecutive transmembrane segments (helical) span residues 1–21 (MSYL…VLTR), 25–45 (ILVF…LVGF), and 59–79 (MVIA…VAIF).

Belongs to the complex I subunit 4L family. NDH-1 is composed of 15 different subunits, Nqo1 to Nqo15. The complex has a L-shaped structure, with the hydrophobic arm (subunits Nqo7, Nqo8 and Nqo10 to Nqo14) embedded in the membrane and the hydrophilic peripheral arm (subunits Nqo1 to Nqo6, Nqo9 and Nqo15) protruding into the bacterial cytoplasm. The hydrophilic domain contains all the redox centers.

The protein resides in the cell inner membrane. The enzyme catalyses a quinone + NADH + 5 H(+)(in) = a quinol + NAD(+) + 4 H(+)(out). NDH-1 shuttles electrons from NADH, via FMN and iron-sulfur (Fe-S) centers, to quinones in the respiratory chain. The immediate electron acceptor for the enzyme in this species is menaquinone. Couples the redox reaction to proton translocation (for every two electrons transferred, four hydrogen ions are translocated across the cytoplasmic membrane), and thus conserves the redox energy in a proton gradient required for the synthesis of ATP. This is NADH-quinone oxidoreductase subunit 11 (nqo11) from Thermus thermophilus (strain ATCC 27634 / DSM 579 / HB8).